Reading from the N-terminus, the 525-residue chain is Beta-galactoside alpha-2,6-sialyltransferase 2 (525 aa).

Residues 1 to 11 are Cytoplasmic-facing; that stretch reads MKPHLKQWRQR. A helical; Signal-anchor for type II membrane protein membrane pass occupies residues 12 to 32; it reads MLFAIFVWGLLFLAIFIYFTN. Over 33-525 the chain is Lumenal; sequence SNPAAPMPSS…PVTRPNNTNT (493 aa). Disordered stretches follow at residues 85-107 and 145-183; these read SASP…DGFD and RQGA…PEEA. 3 cysteine pairs are disulfide-bonded: C249-C515, C292-C444, and C462-C473. 2 N-linked (GlcNAc...) asparagine glycosylation sites follow: N303 and N333. N521 is a glycosylation site (N-linked (GlcNAc...) asparagine).

The protein belongs to the glycosyltransferase 29 family.

The protein resides in the golgi apparatus. Its subcellular location is the golgi stack membrane. The enzyme catalyses a beta-D-galactoside + CMP-N-acetyl-beta-neuraminate = an N-acetyl-alpha-neuraminyl-(2-&gt;6)-beta-D-galactosyl derivative + CMP + H(+). Its function is as follows. Transfers sialic acid from the donor of substrate CMP-sialic acid to galactose containing acceptor substrates. Has alpha-2,6-sialyltransferase activity toward oligosaccharides that have the Gal-beta-1,4-GlcNAc sequence at the non-reducing end of their carbohydrate groups, but it has weak or no activities toward glycoproteins and glycolipids. The protein is Beta-galactoside alpha-2,6-sialyltransferase 2 (St6gal2) of Rattus norvegicus (Rat).